The following is a 412-amino-acid chain: Mannose-1-phosphate guanylyltransferase regulatory subunit alpha (412 aa).

Positions 6–259 (TKAIILVGGP…VGFWRQIKNA (254 aa)) are substrate-binding domain. Residues Glu88 and Gln255 each coordinate GDP-alpha-D-mannose. Residues 281 to 412 (LKKGNNIIGN…DRNYNNEIIL (132 aa)) form a hexapeptide repeat domain region.

The protein belongs to the transferase hexapeptide repeat family. As to quaternary structure, component of the GMPPA-GMPPB mannose-1-phosphate guanylyltransferase complex composed of 4 gmppA subunits and 8 gmppB subunits; the complex is organized into three layers, a central layer made up of 2 gmppA dimers sandwiched between two layers each made up of 2 gmppB dimers.

In terms of biological role, regulatory subunit of the GMPPA-GMPPB mannose-1-phosphate guanylyltransferase complex; reduces the catalytic activity of GMPPB when part of the complex. Mediates allosteric feedback inhibition of GMPPB catalytic activity upon binding GDP-alpha-D-mannose. Together with GMPPB regulates GDP-alpha-D-mannose levels. This chain is Mannose-1-phosphate guanylyltransferase regulatory subunit alpha (gmppA), found in Dictyostelium discoideum (Social amoeba).